A 324-amino-acid polypeptide reads, in one-letter code: MADGDSGSERGGGGGGGGGPGGFQPAPRGGGGGGGGPGGEQETQELASKRLDIQNKRFYLDVKQNAKGRFLKIAEVGAGGSKSRLTLSMAVAAEFRDSLGDFIEHYAQLGPSSPEQLAAGAEEGGGPRRALKSEFLVRENRKYYLDLKENQRGRFLRIRQTVNRGGGGFGGGPGPGGLQSGQTIALPAQGLIEFRDALAKLIDDYGGDEDELAGGPGGGAGGPGGGLYGELPEGTSITVDSKRFFFDVGCNKYGVFLRVSEVKPSYRNAITVPFKAWGKFGGAFCRYADEMKEIQERQRDKLYERRGGGSGGGDESEGEEVDED.

The tract at residues 1–47 is disordered; that stretch reads MADGDSGSERGGGGGGGGGPGGFQPAPRGGGGGGGGPGGEQETQELA. At alanine 2 the chain carries N-acetylalanine. Phosphoserine occurs at positions 6 and 8. Residues 9–39 show a composition bias toward gly residues; sequence ERGGGGGGGGGPGGFQPAPRGGGGGGGGPGG. Arginine 28 bears the Omega-N-methylarginine mark. The tract at residues 37-263 is DNA-binding; that stretch reads PGGEQETQEL…GVFLRVSEVK (227 aa). Position 43 is a phosphothreonine (threonine 43). Residue serine 113 is modified to Phosphoserine. Arginine 164 is subject to Omega-N-methylarginine. Lysine 279 bears the N6-acetyllysine mark. Residues 297–307 are compositionally biased toward basic and acidic residues; it reads RQRDKLYERRG. Positions 297–324 are disordered; it reads RQRDKLYERRGGGSGGGDESEGEEVDED. Arginine 306 bears the Omega-N-methylarginine mark. Serine 310 and serine 316 each carry phosphoserine. Residues 314 to 324 show a composition bias toward acidic residues; sequence DESEGEEVDED.

This sequence belongs to the PUR DNA-binding protein family. As to quaternary structure, homodimer, heterodimer with PURA and heterotrimer with PURA and YBX1/Y-box protein 1. Interacts with MYOCD and SRF.

It is found in the nucleus. Its function is as follows. Transcriptional regulator which can act as an activator or a repressor. Represses the transcription of ACTA2 in fibroblasts and smooth muscle cells via its ability to interact with the purine-rich strand of a MCAT-containing element in the 5' flanking region of the gene. Represses the transcription of MYOCD, capable of repressing all isoforms of MYOCD but the magnitude of the repressive effects is most notable for the SMC-specific isoforms. Promotes hepatic glucose production by activating the transcription of ADCY6, leading to cAMP accumulation, increased PKA activity, CREB activation, and increased transcription of PCK1 and G6PC genes. Has capacity to bind repeated elements in single-stranded DNA such as the purine-rich single strand of the PUR element located upstream of the MYC gene. Participates in transcriptional and translational regulation of alpha-MHC expression in cardiac myocytes by binding to the purine-rich negative regulatory (PNR) element. Modulates constitutive liver galectin-3 gene transcription by binding to its promoter. May play a role in the dendritic transport of a subset of mRNAs. The chain is Transcriptional regulator protein Pur-beta (Purb) from Mus musculus (Mouse).